A 208-amino-acid chain; its full sequence is Probable nicotinate-nucleotide adenylyltransferase (208 aa).

Belongs to the NadD family.

It catalyses the reaction nicotinate beta-D-ribonucleotide + ATP + H(+) = deamido-NAD(+) + diphosphate. It functions in the pathway cofactor biosynthesis; NAD(+) biosynthesis; deamido-NAD(+) from nicotinate D-ribonucleotide: step 1/1. In terms of biological role, catalyzes the reversible adenylation of nicotinate mononucleotide (NaMN) to nicotinic acid adenine dinucleotide (NaAD). The polypeptide is Probable nicotinate-nucleotide adenylyltransferase (Nostoc sp. (strain PCC 7120 / SAG 25.82 / UTEX 2576)).